The sequence spans 259 residues: (3R)-3-hydroxyacyl-CoA dehydrogenase (259 aa).

Residues 13–21 (LVTGAGSGI) and 40–41 (DL) contribute to the NAD(+) site. Ser58 is subject to Phosphoserine. Lys66 bears the N6-acetyllysine mark. 72–74 (ADV) serves as a coordination point for NAD(+). Ser154 serves as a coordination point for substrate. Lys158 carries the post-translational modification N6-succinyllysine. The active-site Proton acceptor is Tyr167. NAD(+) is bound by residues 167 to 171 (YASSK) and 200 to 202 (IAT). Lys171 is subject to N6-succinyllysine.

The protein belongs to the short-chain dehydrogenases/reductases (SDR) family. In terms of assembly, heterotetramer with CBR4; contains two molecules of HSD17B8 and CBR4. As to expression, kidney, liver, testis, ovary and spleen. Oviduct, uterus, mammary gland, vagina, prostate, clitoral gland and moderately heart, dorsal skin, brain and lung.

Its subcellular location is the mitochondrion matrix. It carries out the reaction a (3R)-3-hydroxyacyl-CoA + NAD(+) = a 3-oxoacyl-CoA + NADH + H(+). The enzyme catalyses 17beta-estradiol + NAD(+) = estrone + NADH + H(+). The catalysed reaction is testosterone + NAD(+) = androst-4-ene-3,17-dione + NADH + H(+). It catalyses the reaction 17beta-hydroxy-5alpha-androstan-3-one + NAD(+) = 5alpha-androstan-3,17-dione + NADH + H(+). Its pathway is lipid metabolism; fatty acid biosynthesis. It functions in the pathway steroid biosynthesis; estrogen biosynthesis. The protein operates within lipid metabolism; mitochondrial fatty acid beta-oxidation. Its function is as follows. Required for the solubility and assembly of the heterotetramer 3-ketoacyl-[acyl carrier protein] (ACP) reductase functional complex (KAR or KAR1) that forms part of the mitochondrial fatty acid synthase (mtFAS). Alpha-subunit of the KAR complex, acts as scaffold protein, required for the stability of carbonyl reductase type-4 (CBR4, beta-subunit of the KAR complex) and for its 3-ketoacyl-ACP reductase activity, thereby participating in mitochondrial fatty acid biosynthesis. Catalyzes the NAD-dependent conversion of (3R)-3-hydroxyacyl-CoA into 3-ketoacyl-CoA (3-oxoacyl-CoA) with no chain length preference, this enzymatic activity is not needed for the KAR function. Prefers (3R)-3-hydroxyacyl-CoA over (3S)-3-hydroxyacyl-CoA and displays enzymatic activity only in the presence of NAD(+)(H). Cooperates with enoyl-CoA hydratase 1 in mitochondria, together they constitute an alternative route to the auxiliary enzyme pathways for the breakdown of Z-PUFA (cis polyunsaturated fatty acid) enoyl-esters. NAD-dependent 17-beta-hydroxysteroid dehydrogenase with highest activity towards estradiol. It efficiently catalyzes the oxidation of estradiol (E2), testosterone, and dihydrotestosterone. Primarily an oxidative enzyme, it can switch to a reductive mode determined in the appropriate physiologic milieu and catalyze the reduction of estrone (E1) to form biologically active estradiol (E2). This Mus musculus (Mouse) protein is (3R)-3-hydroxyacyl-CoA dehydrogenase (Hsd17b8).